A 1728-amino-acid polypeptide reads, in one-letter code: Hybrid PKS-NRPS synthetase TAS1 (1728 aa).

The segment at serine 153–valine 499 is condensation (C) domain. Residues lysine 608 to asparagine 1002 are adenylation (A) domain. One can recognise a Carrier domain in the interval methionine 1141 to valine 1219. At serine 1177 the chain carries O-(pantetheine 4'-phosphoryl)serine. The tract at residues leucine 1225–valine 1256 is disordered. 2 stretches are compositionally biased toward low complexity: residues glycine 1226 to serine 1237 and glutamate 1244 to serine 1255. A Ketosynthase family 3 (KS3) domain is found at arginine 1262 to threonine 1714. Catalysis depends on for beta-ketoacyl synthase activity residues cysteine 1436, histidine 1579, and asparagine 1633.

It in the N-terminal section; belongs to the NRP synthetase family. It depends on pantetheine 4'-phosphate as a cofactor.

It catalyses the reaction acetoacetyl-CoA + L-isoleucine + ATP = tenuazonic acid + AMP + diphosphate + CoA + 2 H(+). Hybrid PKS-NRPS synthetase that mediates the biosynthesis of the toxin tenuazonic acid (TeA), an inhibitor of protein biosynthesis on ribosomes by suppressing the release of new protein. TAS1 alone is sufficient for TeA synthesis via the condensation of isoleucine (Ile) with acetoacetyl-CoA by the N-terminal NRPS module and subsequent cyclization conducted by the C-terminal KS domain. The sequence is that of Hybrid PKS-NRPS synthetase TAS1 from Pyricularia oryzae (strain 70-15 / ATCC MYA-4617 / FGSC 8958) (Rice blast fungus).